Here is a 285-residue protein sequence, read N- to C-terminus: Lipoyl synthase (285 aa).

7 residues coordinate [4Fe-4S] cluster: Cys36, Cys41, Cys47, Cys62, Cys66, Cys69, and Ser275. The region spanning 48–264 (FSKKTATFLI…KEYAISIGFK (217 aa)) is the Radical SAM core domain.

This sequence belongs to the radical SAM superfamily. Lipoyl synthase family. [4Fe-4S] cluster is required as a cofactor.

The protein resides in the cytoplasm. The enzyme catalyses [[Fe-S] cluster scaffold protein carrying a second [4Fe-4S](2+) cluster] + N(6)-octanoyl-L-lysyl-[protein] + 2 oxidized [2Fe-2S]-[ferredoxin] + 2 S-adenosyl-L-methionine + 4 H(+) = [[Fe-S] cluster scaffold protein] + N(6)-[(R)-dihydrolipoyl]-L-lysyl-[protein] + 4 Fe(3+) + 2 hydrogen sulfide + 2 5'-deoxyadenosine + 2 L-methionine + 2 reduced [2Fe-2S]-[ferredoxin]. It functions in the pathway protein modification; protein lipoylation via endogenous pathway; protein N(6)-(lipoyl)lysine from octanoyl-[acyl-carrier-protein]: step 2/2. Functionally, catalyzes the radical-mediated insertion of two sulfur atoms into the C-6 and C-8 positions of the octanoyl moiety bound to the lipoyl domains of lipoate-dependent enzymes, thereby converting the octanoylated domains into lipoylated derivatives. This is Lipoyl synthase from Caldicellulosiruptor saccharolyticus (strain ATCC 43494 / DSM 8903 / Tp8T 6331).